The sequence spans 169 residues: Ribosome maturation factor RimP (169 aa).

This sequence belongs to the RimP family.

It is found in the cytoplasm. Required for maturation of 30S ribosomal subunits. The chain is Ribosome maturation factor RimP from Pseudomonas putida (strain W619).